A 357-amino-acid chain; its full sequence is Velvet complex subunit 2 (357 aa).

A Velvet domain is found at 32 to 341 (RRAERKYKLE…AQQGIKIPIR (310 aa)).

This sequence belongs to the velvet family. VelB subfamily. As to quaternary structure, component of the heterotrimeric velvet complex composed of LAE1, VEL1 and VEL2; VEL1A acting as a bridging protein between LAE1 and VEL2. Forms a heterodimeric complex with VOS1; the formation of the VEL2-VOS1 complex is light-dependent.

It localises to the nucleus. Its subcellular location is the cytoplasm. Its function is as follows. Component of the velvet transcription factor complex that controls sexual/asexual developmental ratio in response to light, promoting sexual development in the darkness while stimulating asexual sporulation under illumination. The velvet complex acts as a global regulator for secondary metabolite gene expression. Component of the VEL2-VOS1 heterodimeric complex that plays a dual role in activating genes associated with spore maturation and repressing certain development-associated genes. The complex binds DNA through the DNA-binding domain of VOS1 that recognizes an 11-nucleotide consensus sequence 5'-CTGGCCGCGGC-3' consisting of two motifs in the promoters of key developmental regulatory genes. The VEL2-VOS1 complex is required for normal pseudothecium development and regulates asexual spore compartmentalization, pigmentation and germination. The chain is Velvet complex subunit 2 from Cochliobolus heterostrophus (strain C5 / ATCC 48332 / race O) (Southern corn leaf blight fungus).